The sequence spans 171 residues: Adenine phosphoribosyltransferase (171 aa).

Belongs to the purine/pyrimidine phosphoribosyltransferase family. As to quaternary structure, homodimer.

The protein localises to the cytoplasm. It carries out the reaction AMP + diphosphate = 5-phospho-alpha-D-ribose 1-diphosphate + adenine. It participates in purine metabolism; AMP biosynthesis via salvage pathway; AMP from adenine: step 1/1. Catalyzes a salvage reaction resulting in the formation of AMP, that is energically less costly than de novo synthesis. The polypeptide is Adenine phosphoribosyltransferase (Syntrophotalea carbinolica (strain DSM 2380 / NBRC 103641 / GraBd1) (Pelobacter carbinolicus)).